The sequence spans 263 residues: MARGPKKHLKRVAAPKHWMLDKLTGVFAPRPSTGPHKLRECLPLIIFLRNRLKYALTGDEVKKICMQRFIKIDGKVRTDITYPAGFMDVISIEKTGEHFRLVYDTKGRFAVHRITAEEAKYKLCKVRKIFVATKGIPHLVTHDARTIRYPDPLIKVNDTVQINLETGKITDFIKFDTGNLCMVTGGANLGRIGVITNREKHPGSFDVVHVKDANGNSFATRLSNIFVIGKGNKPWISLPRGKGIRLTIAEERDKRLAAKQSSG.

The 63-residue stretch at 42-104 (LPLIIFLRNR…TGEHFRLVYD (63 aa)) folds into the S4 RNA-binding domain.

The protein belongs to the eukaryotic ribosomal protein eS4 family.

The polypeptide is Small ribosomal subunit protein eS4, Y isoform 1 (RPS4Y1) (Monodelphis domestica (Gray short-tailed opossum)).